We begin with the raw amino-acid sequence, 863 residues long: MQELTPMMQQYMEIKQKVKDCILFFRLGDFYEMFFEDAIVASKELEIALTSRDCGNNEKAPMCGVPYHSATSYIAKLIEKGYKVAICEQVEDPKLAKGIVKREITRIITPGTFIDDNISTANNFICCISKDRSEFALTFVDVSTGEMYSCLLEEDLQKLVNEIGKYSPSEILISNIEDELYEFLKKNCTSFVQMIEFVDLQKCHEIIENQINVGKIDEKLILSVGNLLKYLTETQKISFDYIRRFEFYRVQNYLQIDINTKRNLELTESIIQRSRKNSLLGILDQTKTSMGSRLLKKWIERPLIDIIEINKRLDSVEELKSNYSTLVQVEELLSRMYDIERLSSKFAYKNVNAKDLLSLKKSIEVLPTLKQFLSSFDSELLKEIYEGLDTLEDIYALIDSSINEDAPVSLKEGGIIKEGFNEEVDRLRNISKNSKELLVEYEEKERNLTGIKNLRIGYNKVFGYYIEVTKSNYSLVPDRYIRKQTLANAERYITEELKKLEDEILGADQKLIELEYQLFCEIRDRIEAQIERIQKTASNIANLDVLCSFARIAIDNEYVRPNVYLGDRIYIKNGRHPVVEKMIGRGNFIPNDTELDQAENRVLIITGPNMAGKSTYMRQVALIVIMAQMGCFVPADEAHIGVVDKIFSRIGASDDISSGQSTFMVEMSEVANILKNATPKSLIIFDEVGRGTSTYDGLSIAWAVLEYVADKSKIGAKTLFATHYHELTELEERIPGVKNYRVDVKEEGKNIIFLRKIVRGGCDSSYGIHVARLAGIPEEVLKRAEEILKQLEEADINRKNIRKLRREIKKEFTEQIDFFSYKKEEIIDKIEKLDILNITPIQALNILSELKHEIIKAKERQLI.

607–614 is an ATP binding site; the sequence is GPNMAGKS.

Belongs to the DNA mismatch repair MutS family.

This protein is involved in the repair of mismatches in DNA. It is possible that it carries out the mismatch recognition step. This protein has a weak ATPase activity. This chain is DNA mismatch repair protein MutS, found in Caldicellulosiruptor bescii (strain ATCC BAA-1888 / DSM 6725 / KCTC 15123 / Z-1320) (Anaerocellum thermophilum).